We begin with the raw amino-acid sequence, 185 residues long: Ribosome-recycling factor (185 aa).

The protein belongs to the RRF family.

The protein resides in the cytoplasm. Its function is as follows. Responsible for the release of ribosomes from messenger RNA at the termination of protein biosynthesis. May increase the efficiency of translation by recycling ribosomes from one round of translation to another. This chain is Ribosome-recycling factor, found in Legionella pneumophila (strain Paris).